The following is a 341-amino-acid chain: Phosphoribosylformylglycinamidine cyclo-ligase (341 aa).

Belongs to the AIR synthase family.

It is found in the cytoplasm. It catalyses the reaction 2-formamido-N(1)-(5-O-phospho-beta-D-ribosyl)acetamidine + ATP = 5-amino-1-(5-phospho-beta-D-ribosyl)imidazole + ADP + phosphate + H(+). It functions in the pathway purine metabolism; IMP biosynthesis via de novo pathway; 5-amino-1-(5-phospho-D-ribosyl)imidazole from N(2)-formyl-N(1)-(5-phospho-D-ribosyl)glycinamide: step 2/2. This chain is Phosphoribosylformylglycinamidine cyclo-ligase, found in Xanthomonas campestris pv. campestris (strain 8004).